Consider the following 1019-residue polypeptide: UPF0182 protein Tery_0938 (1019 aa).

A run of 9 helical transmembrane segments spans residues 23–43 (IHIL…GFST), 67–87 (TETW…LVNL), 128–148 (LSLS…GLIL), 192–212 (LWLL…PILW), 213–233 (LSVF…SHWA), 270–290 (FWLI…YLLS), 313–333 (LGGG…FELL), 355–375 (YVFL…QAIF), and 416–436 (AILT…PKIV).

It belongs to the UPF0182 family.

The protein localises to the cell membrane. This Trichodesmium erythraeum (strain IMS101) protein is UPF0182 protein Tery_0938.